We begin with the raw amino-acid sequence, 535 residues long: T-complex protein 1 subunit beta (535 aa).

Ala2 carries the N-acetylalanine modification. The residue at position 3 (Ser3) is a Phosphoserine. Residue Lys13 is modified to N6-acetyllysine. Position 44 (Gly44) interacts with ADP. Gly44 serves as a coordination point for ATP. Ser60 carries the phosphoserine modification. Asp97 is a Mg(2+) binding site. ADP is bound by residues Gly98, Thr99, Thr100, and Ser101. ATP-binding residues include Gly98, Thr99, and Thr100. Lys154 carries the post-translational modification N6-acetyllysine. Positions 168 and 169 each coordinate ADP. Lys181 is subject to N6-acetyllysine. Residue Lys248 forms a Glycyl lysine isopeptide (Lys-Gly) (interchain with G-Cter in SUMO2) linkage. At Ser260 the chain carries Phosphoserine. Residue Thr261 is modified to Phosphothreonine. Positions 410, 495, and 500 each coordinate ADP. ATP-binding residues include Glu495 and Lys500.

The protein belongs to the TCP-1 chaperonin family. Component of the chaperonin-containing T-complex (TRiC), a hexadecamer composed of two identical back-to-back stacked rings enclosing a protein folding chamber. Each ring is made up of eight different subunits: TCP1/CCT1, CCT2, CCT3, CCT4, CCT5, CCT6A/CCT6, CCT7, CCT8. Interacts with PACRG. Interacts with FLCN. Interacts with DLEC1. Interacts with SVEP1.

It is found in the cytoplasm. The catalysed reaction is ATP + H2O = ADP + phosphate + H(+). Component of the chaperonin-containing T-complex (TRiC), a molecular chaperone complex that assists the folding of actin, tubulin and other proteins upon ATP hydrolysis. The TRiC complex mediates the folding of WRAP53/TCAB1, thereby regulating telomere maintenance. As part of the TRiC complex may play a role in the assembly of BBSome, a complex involved in ciliogenesis regulating transports vesicles to the cilia. This Rattus norvegicus (Rat) protein is T-complex protein 1 subunit beta (Cct2).